We begin with the raw amino-acid sequence, 385 residues long: Probable threonine protease PRSS50 (385 aa).

Residues 1 to 39 (MGRWCQTVARGQRPRTSAPSRAGALLLLLLLLRSAGCWG) form the signal peptide. Residues 93 to 358 (VSEGKVDPYR…YQHWIWDCLN (266 aa)) enclose the Peptidase S1 domain. A glycan (N-linked (GlcNAc...) asparagine) is linked at N133. An intrachain disulfide couples C138 to C154. Catalysis depends on charge relay system residues H153 and D206. 3 cysteine pairs are disulfide-bonded: C240–C316, C273–C296, and C306–C334. N279 is a glycosylation site (N-linked (GlcNAc...) asparagine). T310 serves as the catalytic Charge relay system.

Belongs to the peptidase S1 family. As to expression, testis specific. Differentially expressed in some breast cancer tissues.

The protein localises to the endoplasmic reticulum. Its function is as follows. May be involved in proteolysis through its threonine endopeptidase activity. The protein is Probable threonine protease PRSS50 (PRSS50) of Homo sapiens (Human).